The primary structure comprises 769 residues: Glutathione biosynthesis bifunctional protein GshAB (769 aa).

The glutamate--cysteine ligase stretch occupies residues 1 to 347 (MLDSFKENEA…QLADENENNI (347 aa)). The ATP-grasp domain occupies 514 to 768 (KLVLAEHGIR…IGDKILDFLF (255 aa)). Position 541 to 599 (541 to 599 (SLFEDKQIVVKPKSTNYGWGISIFKNKFTLEDYQEALNIAFSYDSSVIIEEFIPGDEFR)) interacts with ATP. 3 residues coordinate Mg(2+): aspartate 721, glutamate 738, and asparagine 740. Mn(2+) is bound by residues aspartate 721, glutamate 738, and asparagine 740.

This sequence in the N-terminal section; belongs to the glutamate--cysteine ligase type 1 family. Type 2 subfamily. As to quaternary structure, monomer. The cofactor is Mg(2+). Mn(2+) is required as a cofactor.

It carries out the reaction L-cysteine + L-glutamate + ATP = gamma-L-glutamyl-L-cysteine + ADP + phosphate + H(+). It catalyses the reaction gamma-L-glutamyl-L-cysteine + glycine + ATP = glutathione + ADP + phosphate + H(+). The protein operates within sulfur metabolism; glutathione biosynthesis; glutathione from L-cysteine and L-glutamate: step 1/2. Its pathway is sulfur metabolism; glutathione biosynthesis; glutathione from L-cysteine and L-glutamate: step 2/2. Functionally, synthesizes glutathione from L-glutamate and L-cysteine via gamma-L-glutamyl-L-cysteine. In Listeria innocua serovar 6a (strain ATCC BAA-680 / CLIP 11262), this protein is Glutathione biosynthesis bifunctional protein GshAB.